The sequence spans 305 residues: Aspartate carbamoyltransferase catalytic subunit (305 aa).

The carbamoyl phosphate site is built by arginine 54 and threonine 55. Lysine 83 contributes to the L-aspartate binding site. Positions 104, 132, and 135 each coordinate carbamoyl phosphate. Arginine 165 and arginine 226 together coordinate L-aspartate. Residues leucine 265 and proline 266 each coordinate carbamoyl phosphate.

This sequence belongs to the aspartate/ornithine carbamoyltransferase superfamily. ATCase family. Heterooligomer of catalytic and regulatory chains.

The enzyme catalyses carbamoyl phosphate + L-aspartate = N-carbamoyl-L-aspartate + phosphate + H(+). It functions in the pathway pyrimidine metabolism; UMP biosynthesis via de novo pathway; (S)-dihydroorotate from bicarbonate: step 2/3. Its function is as follows. Catalyzes the condensation of carbamoyl phosphate and aspartate to form carbamoyl aspartate and inorganic phosphate, the committed step in the de novo pyrimidine nucleotide biosynthesis pathway. The sequence is that of Aspartate carbamoyltransferase catalytic subunit from Pyrobaculum calidifontis (strain DSM 21063 / JCM 11548 / VA1).